Here is a 158-residue protein sequence, read N- to C-terminus: Endoribonuclease YbeY (158 aa).

Zn(2+) contacts are provided by His120, His124, and His130.

This sequence belongs to the endoribonuclease YbeY family. It depends on Zn(2+) as a cofactor.

It is found in the cytoplasm. In terms of biological role, single strand-specific metallo-endoribonuclease involved in late-stage 70S ribosome quality control and in maturation of the 3' terminus of the 16S rRNA. The chain is Endoribonuclease YbeY from Spiroplasma citri.